The following is a 244-amino-acid chain: Aspartate/glutamate leucyltransferase (244 aa).

Belongs to the R-transferase family. Bpt subfamily.

It localises to the cytoplasm. The enzyme catalyses N-terminal L-glutamyl-[protein] + L-leucyl-tRNA(Leu) = N-terminal L-leucyl-L-glutamyl-[protein] + tRNA(Leu) + H(+). It catalyses the reaction N-terminal L-aspartyl-[protein] + L-leucyl-tRNA(Leu) = N-terminal L-leucyl-L-aspartyl-[protein] + tRNA(Leu) + H(+). Its function is as follows. Functions in the N-end rule pathway of protein degradation where it conjugates Leu from its aminoacyl-tRNA to the N-termini of proteins containing an N-terminal aspartate or glutamate. The sequence is that of Aspartate/glutamate leucyltransferase from Bordetella parapertussis (strain 12822 / ATCC BAA-587 / NCTC 13253).